A 197-amino-acid polypeptide reads, in one-letter code: Probable molybdenum cofactor guanylyltransferase (197 aa).

Residues 6–8 (LAG), Lys18, Asp65, and Asp97 each bind GTP. A Mg(2+)-binding site is contributed by Asp97.

The protein belongs to the MobA family. Mg(2+) serves as cofactor.

The protein resides in the cytoplasm. The enzyme catalyses Mo-molybdopterin + GTP + H(+) = Mo-molybdopterin guanine dinucleotide + diphosphate. Functionally, transfers a GMP moiety from GTP to Mo-molybdopterin (Mo-MPT) cofactor (Moco or molybdenum cofactor) to form Mo-molybdopterin guanine dinucleotide (Mo-MGD) cofactor. The sequence is that of Probable molybdenum cofactor guanylyltransferase from Staphylococcus carnosus (strain TM300).